Reading from the N-terminus, the 166-residue chain is Putative membrane protein 162 (166 aa).

A topological domain (intravirion) is located at residue Met-1. The helical transmembrane segment at 2 to 22 (YYPAVQVLIGIILVDNFNTEF) threads the bilayer. The Virion surface portion of the chain corresponds to 23–166 (LSSEKKNCKT…TIMGIARNIL (144 aa)).

Belongs to the asfivirus envelope protein p22 family.

It localises to the virion membrane. The protein localises to the host cell membrane. This is Putative membrane protein 162 from African swine fever virus (isolate Tick/Malawi/Lil 20-1/1983) (ASFV).